The following is a 440-amino-acid chain: Chromosome partition protein MukF (440 aa).

The segment at 208-236 (LSETSGTLRELQDTLEAAGDKLQANLLRI) is leucine-zipper.

It belongs to the MukF family. Interacts, and probably forms a ternary complex, with MukE and MukB via its C-terminal region. The complex formation is stimulated by calcium or magnesium. It is required for an interaction between MukE and MukB.

Its subcellular location is the cytoplasm. The protein resides in the nucleoid. Functionally, involved in chromosome condensation, segregation and cell cycle progression. May participate in facilitating chromosome segregation by condensation DNA from both sides of a centrally located replisome during cell division. Not required for mini-F plasmid partitioning. Probably acts via its interaction with MukB and MukE. Overexpression results in anucleate cells. It has a calcium binding activity. In Salmonella agona (strain SL483), this protein is Chromosome partition protein MukF.